A 94-amino-acid chain; its full sequence is Enhancer of yellow 2 transcription factor (94 aa).

The protein belongs to the ENY2 family. As to quaternary structure, component of the nuclear pore complex (NPC)-associated AMEX complex (anchoring and mRNA export complex), composed of at least e(y)2 and xmas-2. Component of the SAGA transcription coactivator-HAT complexes, at least composed of Ada2b, e(y)2, Pcaf/Gcn5, Taf10 and Nipped-A/Trrap. Within the SAGA complex, e(y)2, Sgf11, and not/nonstop form an additional subcomplex of SAGA called the DUB module (deubiquitination module). Component of the THO complex, composed of at least e(y)2, HPR1, THO2, THOC5, THOC6 and THOC7. Interacts with e(y)1. Interacts with su(Hw) (via zinc fingers). Interacts with xmas-2; required for localization to the nuclear periphery. Interacts with the nuclear pore complex (NPC).

It is found in the nucleus. Its subcellular location is the nucleoplasm. The protein localises to the cytoplasm. In terms of biological role, involved in mRNA export coupled transcription activation by association with both the AMEX and the SAGA complexes. The SAGA complex is a multiprotein complex that activates transcription by remodeling chromatin and mediating histone acetylation and deubiquitination. Within the SAGA complex, participates in a subcomplex that specifically deubiquitinates histone H2B. The SAGA complex is recruited to specific gene promoters by activators, where it is required for transcription. Required for nuclear receptor-mediated transactivation. Involved in transcription elongation by recruiting the THO complex onto nascent mRNA. The AMEX complex functions in docking export-competent ribonucleoprotein particles (mRNPs) to the nuclear entrance of the nuclear pore complex (nuclear basket). AMEX participates in mRNA export and accurate chromatin positioning in the nucleus by tethering genes to the nuclear periphery. This chain is Enhancer of yellow 2 transcription factor, found in Drosophila mojavensis (Fruit fly).